Reading from the N-terminus, the 376-residue chain is Erythronate-4-phosphate dehydrogenase (376 aa).

Substrate-binding residues include S45 and T67. D147 contributes to the NAD(+) binding site. The active site involves R209. D233 contacts NAD(+). The active site involves E238. Residue H255 is the Proton donor of the active site. G258 is an NAD(+) binding site. Y259 contacts substrate.

Belongs to the D-isomer specific 2-hydroxyacid dehydrogenase family. PdxB subfamily. Homodimer.

It localises to the cytoplasm. The catalysed reaction is 4-phospho-D-erythronate + NAD(+) = (R)-3-hydroxy-2-oxo-4-phosphooxybutanoate + NADH + H(+). It participates in cofactor biosynthesis; pyridoxine 5'-phosphate biosynthesis; pyridoxine 5'-phosphate from D-erythrose 4-phosphate: step 2/5. In terms of biological role, catalyzes the oxidation of erythronate-4-phosphate to 3-hydroxy-2-oxo-4-phosphonooxybutanoate. The sequence is that of Erythronate-4-phosphate dehydrogenase from Shewanella baltica (strain OS155 / ATCC BAA-1091).